We begin with the raw amino-acid sequence, 56 residues long: Large ribosomal subunit protein bL32 (56 aa).

A disordered region spans residues 1 to 26; the sequence is MAVQQNKKSRSKRGMRRSHDALSTAQ. The segment covering 7-16 has biased composition (basic residues); that stretch reads KKSRSKRGMR.

Belongs to the bacterial ribosomal protein bL32 family.

This Shewanella baltica (strain OS155 / ATCC BAA-1091) protein is Large ribosomal subunit protein bL32.